The following is a 906-amino-acid chain: Aconitate hydratase A (906 aa).

Residues 1–2 constitute a propeptide that is removed on maturation; it reads MS. Cys-441, Cys-507, and Cys-510 together coordinate [4Fe-4S] cluster.

It belongs to the aconitase/IPM isomerase family. Monomer. Requires [4Fe-4S] cluster as cofactor.

It carries out the reaction citrate = D-threo-isocitrate. The catalysed reaction is (2S,3R)-3-hydroxybutane-1,2,3-tricarboxylate = 2-methyl-cis-aconitate + H2O. Its pathway is carbohydrate metabolism; tricarboxylic acid cycle; isocitrate from oxaloacetate: step 2/2. It functions in the pathway organic acid metabolism; propanoate degradation. Its function is as follows. Involved in the catabolism of short chain fatty acids (SCFA) via the tricarboxylic acid (TCA)(acetyl degradation route) and probably the 2-methylcitrate cycle I (propionate degradation route). Catalyzes the reversible isomerization of citrate to isocitrate via cis-aconitate. Could catalyze the hydration of 2-methyl-cis-aconitate to yield (2R,3S)-2-methylisocitrate. The apo form of AcnA functions as a RNA-binding regulatory protein. This chain is Aconitate hydratase A (acn), found in Deinococcus radiodurans (strain ATCC 13939 / DSM 20539 / JCM 16871 / CCUG 27074 / LMG 4051 / NBRC 15346 / NCIMB 9279 / VKM B-1422 / R1).